Here is a 340-residue protein sequence, read N- to C-terminus: tRNA N6-adenosine threonylcarbamoyltransferase (340 aa).

Fe cation contacts are provided by His115 and His119. Residues 138 to 142 (VVSGG), Asp171, Gly184, Asp188, and Asn278 contribute to the substrate site. Fe cation is bound at residue Asp306.

It belongs to the KAE1 / TsaD family. Requires Fe(2+) as cofactor.

Its subcellular location is the cytoplasm. It carries out the reaction L-threonylcarbamoyladenylate + adenosine(37) in tRNA = N(6)-L-threonylcarbamoyladenosine(37) in tRNA + AMP + H(+). Functionally, required for the formation of a threonylcarbamoyl group on adenosine at position 37 (t(6)A37) in tRNAs that read codons beginning with adenine. Is involved in the transfer of the threonylcarbamoyl moiety of threonylcarbamoyl-AMP (TC-AMP) to the N6 group of A37, together with TsaE and TsaB. TsaD likely plays a direct catalytic role in this reaction. The chain is tRNA N6-adenosine threonylcarbamoyltransferase from Clostridium botulinum (strain 657 / Type Ba4).